The primary structure comprises 543 residues: Coiled-coil domain-containing protein 9 (543 aa).

Composition is skewed to basic and acidic residues over residues 38 to 47 and 59 to 72; these read IEEDRKKAEL and RSME…EEKS. A disordered region spans residues 38–543; sequence IEEDRKKAEL…SGEAWPFANA (506 aa). Residue Thr-94 is modified to Phosphothreonine. Omega-N-methylarginine occurs at positions 106, 120, 126, and 128. 3 positions are modified to asymmetric dimethylarginine: Arg-129, Arg-131, and Arg-133. Position 135 is a phosphoserine (Ser-135). Basic and acidic residues-rich tracts occupy residues 146–183, 192–212, and 225–239; these read TSDR…REGV, FLDD…DRRE, and DFER…ERQG. Positions 147–183 form a coiled coil; it reads SDRKSKEWEERRRQNIEKMNEEMEKIAEYERNQREGV. Phosphoserine is present on residues Ser-246 and Ser-253. 4 stretches are compositionally biased toward basic and acidic residues: residues 256 to 277, 287 to 300, 309 to 318, and 359 to 372; these read GRER…QERL, WRRE…DGMF, ELSHRYDDQA, and YSDH…REEA. Ser-374 and Ser-384 each carry phosphoserine. Over residues 376-394 the composition is skewed to polar residues; that stretch reads APESSQSISLEETPTQASE. A compositionally biased stretch (acidic residues) spans 405-453; the sequence is EDGEEDVGEEEEGEEEGEDEEDEEWEDVSEDVTEEEEEEEEEFEEDEEG. A coiled-coil region spans residues 422–452; that stretch reads EDEEDEEWEDVSEDVTEEEEEEEEEFEEDEE. Residue Ser-533 is modified to Phosphoserine.

Probable component of the exon junction complex (EJC); the association is RNA-dependent.

In terms of biological role, probable component of the exon junction complex (EJC), a multiprotein complex that associates immediately upstream of the exon-exon junction on mRNAs and serves as a positional landmark for the intron exon structure of genes and directs post-transcriptional processes in the cytoplasm such as mRNA export, nonsense-mediated mRNA decay (NMD) or translation. This chain is Coiled-coil domain-containing protein 9 (Ccdc9), found in Mus musculus (Mouse).